The chain runs to 547 residues: NADH-ubiquinone oxidoreductase chain 5 (547 aa).

A run of 15 helical transmembrane segments spans residues 3-23, 45-65, 80-100, 101-121, 132-152, 198-218, 227-247, 264-284, 319-339, 352-372, 399-419, 430-450, 460-477, 485-505, and 512-532; these read ISIFLMVFLLFCVSLFLIFFV, YFNSIMFSLILLLVTISVLVF, YFMLLVFVGSMFSLIFSSGCF, SMLVSWDLLGISSFFLVLFYN, TVLTNRLGDFFLFVFFSSTIF, ISSLVHSSTLVTAGLVLIMNF, VIMIIMVVGVFTMFFSSMAAL, MGFSMLTVGIGLSFVSFIHLL, VPYFIQLQLLVTLFCLCGLVF, FFFSNFFMVVFACMFFFSVFL, VVMNFLSLLLVLFSIFFIWWM, FLYVDFFVPLFFVVMIMVVGF, FVYKFLVDFFAKGWVYGL, LFLGGINSLGVTFFSFTGFWS, and LYFNSVVIVLVLFFFLVWGCI.

It belongs to the complex I subunit 5 family.

The protein localises to the mitochondrion inner membrane. It carries out the reaction a ubiquinone + NADH + 5 H(+)(in) = a ubiquinol + NAD(+) + 4 H(+)(out). Core subunit of the mitochondrial membrane respiratory chain NADH dehydrogenase (Complex I) that is believed to belong to the minimal assembly required for catalysis. Complex I functions in the transfer of electrons from NADH to the respiratory chain. The immediate electron acceptor for the enzyme is believed to be ubiquinone. The chain is NADH-ubiquinone oxidoreductase chain 5 (ND5) from Ascaris suum (Pig roundworm).